A 435-amino-acid chain; its full sequence is Type A flavoprotein fprA (435 aa).

The zinc metallo-hydrolase stretch occupies residues 48-228 (ANGTTYNAYA…PFRSFVAQAL (181 aa)). Positions 98, 100, 102, 167, 186, and 243 each coordinate Fe cation. Positions 276–415 (LLIFYVSAYG…EGRAFGRRLA (140 aa)) constitute a Flavodoxin-like domain.

This sequence in the N-terminal section; belongs to the zinc metallo-hydrolase group 3 family. Homodimer. The cofactor is FMN. Requires Fe cation as cofactor.

Functionally, low-potential electron donor to a number of redox enzymes. This chain is Type A flavoprotein fprA (fprA), found in Rhodobacter capsulatus (strain ATCC BAA-309 / NBRC 16581 / SB1003).